We begin with the raw amino-acid sequence, 211 residues long: ATP-dependent Clp protease proteolytic subunit (211 aa).

Serine 106 acts as the Nucleophile in catalysis. Histidine 131 is a catalytic residue.

This sequence belongs to the peptidase S14 family. As to quaternary structure, fourteen ClpP subunits assemble into 2 heptameric rings which stack back to back to give a disk-like structure with a central cavity, resembling the structure of eukaryotic proteasomes.

It localises to the cytoplasm. The enzyme catalyses Hydrolysis of proteins to small peptides in the presence of ATP and magnesium. alpha-casein is the usual test substrate. In the absence of ATP, only oligopeptides shorter than five residues are hydrolyzed (such as succinyl-Leu-Tyr-|-NHMec, and Leu-Tyr-Leu-|-Tyr-Trp, in which cleavage of the -Tyr-|-Leu- and -Tyr-|-Trp bonds also occurs).. Its function is as follows. Cleaves peptides in various proteins in a process that requires ATP hydrolysis. Has a chymotrypsin-like activity. Plays a major role in the degradation of misfolded proteins. The sequence is that of ATP-dependent Clp protease proteolytic subunit from Nitrobacter hamburgensis (strain DSM 10229 / NCIMB 13809 / X14).